A 209-amino-acid polypeptide reads, in one-letter code: Uracil phosphoribosyltransferase (209 aa).

5-phospho-alpha-D-ribose 1-diphosphate contacts are provided by residues Arg79, Arg104, and 131-139 (DPMLATGNS). Uracil-binding positions include Ile194 and 199–201 (GDA). Asp200 provides a ligand contact to 5-phospho-alpha-D-ribose 1-diphosphate.

Belongs to the UPRTase family. It depends on Mg(2+) as a cofactor.

The enzyme catalyses UMP + diphosphate = 5-phospho-alpha-D-ribose 1-diphosphate + uracil. It functions in the pathway pyrimidine metabolism; UMP biosynthesis via salvage pathway; UMP from uracil: step 1/1. Its activity is regulated as follows. Allosterically activated by GTP. Its function is as follows. Catalyzes the conversion of uracil and 5-phospho-alpha-D-ribose 1-diphosphate (PRPP) to UMP and diphosphate. The chain is Uracil phosphoribosyltransferase from Rhodococcus jostii (strain RHA1).